A 25-amino-acid polypeptide reads, in one-letter code: Metallothionein (25 aa).

Positions 3, 5, 11, 13, 18, 20, and 23 each coordinate Cu(+).

Belongs to the metallothionein superfamily. Type 8 family.

The metallothioneins are involved in the cellular sequestration of toxic metal ions. Binds six copper (cuprous) ions. The chain is Metallothionein from Agaricus bisporus (White button mushroom).